Here is a 530-residue protein sequence, read N- to C-terminus: Arginine--tRNA ligase (530 aa).

Residues 113–123 (ANPTGPLHIGH) carry the 'HIGH' region motif.

The protein belongs to the class-I aminoacyl-tRNA synthetase family. Monomer.

Its subcellular location is the cytoplasm. It carries out the reaction tRNA(Arg) + L-arginine + ATP = L-arginyl-tRNA(Arg) + AMP + diphosphate. The protein is Arginine--tRNA ligase of Campylobacter jejuni (strain RM1221).